We begin with the raw amino-acid sequence, 261 residues long: Thioesterase TesA (261 aa).

Residues 1 to 24 (MLARHGPRYGGSVNGHSDDSSGDA) form a disordered region. Active-site residues include Ser-104, Asp-208, and His-236.

Belongs to the thioesterase family.

It catalyses the reaction a fatty acyl-CoA + H2O = a fatty acid + CoA + H(+). In terms of biological role, involved in the synthesis of both phthiocerol dimycocerosates (PDIMs) and phenolic glycolipids (PGLs), which are structurally related lipids non-covalently bound to the outer cell wall layer of M.tuberculosis and are important virulence factors. The protein is Thioesterase TesA (tesA) of Mycobacterium bovis (strain ATCC BAA-935 / AF2122/97).